The sequence spans 138 residues: Large ribosomal subunit protein uL16 (138 aa).

The protein belongs to the universal ribosomal protein uL16 family. In terms of assembly, part of the 50S ribosomal subunit.

Functionally, binds 23S rRNA and is also seen to make contacts with the A and possibly P site tRNAs. The sequence is that of Large ribosomal subunit protein uL16 from Hyphomonas neptunium (strain ATCC 15444).